The chain runs to 1270 residues: DNA-directed RNA polymerase subunit beta (1270 aa).

Belongs to the RNA polymerase beta chain family. As to quaternary structure, the RNAP catalytic core consists of 2 alpha, 1 beta, 1 beta' and 1 omega subunit. When a sigma factor is associated with the core the holoenzyme is formed, which can initiate transcription.

It carries out the reaction RNA(n) + a ribonucleoside 5'-triphosphate = RNA(n+1) + diphosphate. DNA-dependent RNA polymerase catalyzes the transcription of DNA into RNA using the four ribonucleoside triphosphates as substrates. This is DNA-directed RNA polymerase subunit beta from Bacteroides thetaiotaomicron (strain ATCC 29148 / DSM 2079 / JCM 5827 / CCUG 10774 / NCTC 10582 / VPI-5482 / E50).